Consider the following 134-residue polypeptide: Large ribosomal subunit protein uL22 (134 aa).

This sequence belongs to the universal ribosomal protein uL22 family. In terms of assembly, part of the 50S ribosomal subunit.

In terms of biological role, this protein binds specifically to 23S rRNA; its binding is stimulated by other ribosomal proteins, e.g. L4, L17, and L20. It is important during the early stages of 50S assembly. It makes multiple contacts with different domains of the 23S rRNA in the assembled 50S subunit and ribosome. Functionally, the globular domain of the protein is located near the polypeptide exit tunnel on the outside of the subunit, while an extended beta-hairpin is found that lines the wall of the exit tunnel in the center of the 70S ribosome. In Rhodococcus jostii (strain RHA1), this protein is Large ribosomal subunit protein uL22.